We begin with the raw amino-acid sequence, 418 residues long: F-box protein At1g10780 (418 aa).

Residues 1 to 47 (MDSLPDAILQYILSYLTSARDVAACNCVSKRWKESTDSVKSVVFHRN) form the F-box domain.

The protein is F-box protein At1g10780 of Arabidopsis thaliana (Mouse-ear cress).